Consider the following 475-residue polypeptide: Aspartyl/glutamyl-tRNA(Asn/Gln) amidotransferase subunit B (475 aa).

The protein belongs to the GatB/GatE family. GatB subfamily. As to quaternary structure, heterotrimer of A, B and C subunits.

The catalysed reaction is L-glutamyl-tRNA(Gln) + L-glutamine + ATP + H2O = L-glutaminyl-tRNA(Gln) + L-glutamate + ADP + phosphate + H(+). It carries out the reaction L-aspartyl-tRNA(Asn) + L-glutamine + ATP + H2O = L-asparaginyl-tRNA(Asn) + L-glutamate + ADP + phosphate + 2 H(+). In terms of biological role, allows the formation of correctly charged Asn-tRNA(Asn) or Gln-tRNA(Gln) through the transamidation of misacylated Asp-tRNA(Asn) or Glu-tRNA(Gln) in organisms which lack either or both of asparaginyl-tRNA or glutaminyl-tRNA synthetases. The reaction takes place in the presence of glutamine and ATP through an activated phospho-Asp-tRNA(Asn) or phospho-Glu-tRNA(Gln). The protein is Aspartyl/glutamyl-tRNA(Asn/Gln) amidotransferase subunit B of Staphylococcus aureus (strain MRSA252).